Here is a 187-residue protein sequence, read N- to C-terminus: Threonylcarbamoyl-AMP synthase (187 aa).

The YrdC-like domain occupies 3-187; the sequence is NSELLKIIWA…LLNGYLYRKR (185 aa).

This sequence belongs to the SUA5 family. TsaC subfamily.

It is found in the cytoplasm. It catalyses the reaction L-threonine + hydrogencarbonate + ATP = L-threonylcarbamoyladenylate + diphosphate + H2O. Required for the formation of a threonylcarbamoyl group on adenosine at position 37 (t(6)A37) in tRNAs that read codons beginning with adenine. Catalyzes the conversion of L-threonine, HCO(3)(-)/CO(2) and ATP to give threonylcarbamoyl-AMP (TC-AMP) as the acyladenylate intermediate, with the release of diphosphate. This chain is Threonylcarbamoyl-AMP synthase, found in Riesia pediculicola (strain USDA).